The chain runs to 409 residues: Peptidase T (409 aa).

Histidine 78 provides a ligand contact to Zn(2+). Aspartate 80 is a catalytic residue. Aspartate 140 lines the Zn(2+) pocket. Glutamate 173 functions as the Proton acceptor in the catalytic mechanism. Zn(2+) contacts are provided by glutamate 174, aspartate 196, and histidine 379.

It belongs to the peptidase M20B family. Requires Zn(2+) as cofactor.

Its subcellular location is the cytoplasm. It catalyses the reaction Release of the N-terminal residue from a tripeptide.. Cleaves the N-terminal amino acid of tripeptides. This chain is Peptidase T, found in Salmonella heidelberg (strain SL476).